The chain runs to 63 residues: Cypmaclein (63 aa).

It belongs to the GASA family. As to expression, expressed in pollen (at protein level).

The chain is Cypmaclein from Cupressus sempervirens (Italian cypress).